The following is a 637-amino-acid chain: 1-deoxy-D-xylulose-5-phosphate synthase (637 aa).

Residues H75 and 116–118 (AHS) each bind thiamine diphosphate. D147 provides a ligand contact to Mg(2+). Thiamine diphosphate-binding positions include 148-149 (GA), N177, Y288, and E370. N177 lines the Mg(2+) pocket.

Belongs to the transketolase family. DXPS subfamily. As to quaternary structure, homodimer. Mg(2+) is required as a cofactor. Requires thiamine diphosphate as cofactor.

The catalysed reaction is D-glyceraldehyde 3-phosphate + pyruvate + H(+) = 1-deoxy-D-xylulose 5-phosphate + CO2. The protein operates within metabolic intermediate biosynthesis; 1-deoxy-D-xylulose 5-phosphate biosynthesis; 1-deoxy-D-xylulose 5-phosphate from D-glyceraldehyde 3-phosphate and pyruvate: step 1/1. Functionally, catalyzes the acyloin condensation reaction between C atoms 2 and 3 of pyruvate and glyceraldehyde 3-phosphate to yield 1-deoxy-D-xylulose-5-phosphate (DXP). This Cupriavidus metallidurans (strain ATCC 43123 / DSM 2839 / NBRC 102507 / CH34) (Ralstonia metallidurans) protein is 1-deoxy-D-xylulose-5-phosphate synthase.